The chain runs to 21 residues: Bombinin-H1/H3 (21 aa).

Ile2 is modified (D-allo-isoleucine; in form H3). Ile20 bears the Isoleucine amide mark.

The protein belongs to the bombinin family. As to expression, expressed by the skin glands.

Its subcellular location is the secreted. In terms of biological role, has antimicrobial and hemolytic activities. The chain is Bombinin-H1/H3 from Bombina variegata (Yellow-bellied toad).